Reading from the N-terminus, the 358-residue chain is Serine/threonine-protein phosphatase 2A activator 2 (358 aa).

As to quaternary structure, interacts with the phosphatase PP2A catalytic subunits PPH21 and PPH22. Forms a ternary complex with PPH21-TAP42.

The protein resides in the cytoplasm. It carries out the reaction [protein]-peptidylproline (omega=180) = [protein]-peptidylproline (omega=0). In terms of biological role, PPIases accelerate the folding of proteins. It catalyzes the cis-trans isomerization of proline imidic peptide bonds in oligopeptides. Acts as a regulatory subunit for TAP42-associated PP2A-like phosphatases modulating their activity or substrate specificity, probably by inducing a conformational change in the catalytic subunit, a direct target of the PPIase. Can reactivate inactive phosphatase PP2A-phosphatase methylesterase complexes (PP2Ai) in presence of ATP and Mg(2+) by dissociating the inactive form from the complex. Acts also inhibitory at high concentrations. Involved in the regulation of cell cycle progression, mitotic spindle formation and bud morphogenesis. This Saccharomyces cerevisiae (strain ATCC 204508 / S288c) (Baker's yeast) protein is Serine/threonine-protein phosphatase 2A activator 2 (RRD2).